The sequence spans 159 residues: Methyl-coenzyme M reductase operon protein D (159 aa).

In terms of assembly, MCR is composed of three subunits: alpha, beta, and gamma. The function of proteins C and D is not known.

This is Methyl-coenzyme M reductase operon protein D (mcrD) from Methanococcus voltae.